A 261-amino-acid polypeptide reads, in one-letter code: Triosephosphate isomerase (261 aa).

10-12 (NWK) contributes to the substrate binding site. Catalysis depends on His-100, which acts as the Electrophile. Catalysis depends on Glu-172, which acts as the Proton acceptor. Substrate-binding positions include Gly-178, Ser-218, and 239-240 (GG).

It belongs to the triosephosphate isomerase family. As to quaternary structure, homodimer.

It is found in the cytoplasm. The enzyme catalyses D-glyceraldehyde 3-phosphate = dihydroxyacetone phosphate. The protein operates within carbohydrate biosynthesis; gluconeogenesis. Its pathway is carbohydrate degradation; glycolysis; D-glyceraldehyde 3-phosphate from glycerone phosphate: step 1/1. Involved in the gluconeogenesis. Catalyzes stereospecifically the conversion of dihydroxyacetone phosphate (DHAP) to D-glyceraldehyde-3-phosphate (G3P). This Saccharopolyspora erythraea (strain ATCC 11635 / DSM 40517 / JCM 4748 / NBRC 13426 / NCIMB 8594 / NRRL 2338) protein is Triosephosphate isomerase.